Consider the following 1333-residue polypeptide: snRNA-activating protein complex subunit 4 (1333 aa).

Residues 29-84 are disordered; sequence HFEVSESSLSSDSEADSLPDEDLETAGAPILEEEGSSESSNDEEDPKDKALPEDPE. 2 stretches are compositionally biased toward acidic residues: residues 41 to 52 and 59 to 73; these read SEADSLPDEDLE and LEEE…DEED. Residue Ser-68 is modified to Phosphoserine. Positions 84-133 are SNAPC5-binding; sequence ETCLQLNMVYQEVIREKLAEVSQLLAQNQEQQEEILFDLSGTKCPKVKDG. The Myb-like 1 domain occupies 250 to 288; that stretch reads EEALLGNRLDSHDWEKISNINFEGARSAEEIRKFWQSSE. In terms of domain architecture, HTH myb-type 1 spans 289 to 343; the sequence is HPSISKQEWSTEEVERLKAIAATHGHLEWHLVAEELGTSRSAFQCLQKFQQYNKT. Positions 317–341 form a DNA-binding region, H-T-H motif; sequence WHLVAEELGTSRSAFQCLQKFQQYN. The Myb-like 2 domain maps to 344-395; that stretch reads LKRKEWTEEEDHMLTQLVQEMRVGNHIPYRKIVYFMEGRDSMQLIYRWTKSL. 2 HTH myb-type domains span residues 396–451 and 452–503; these read DPSL…HFSL and KKGR…RKKQ. 2 DNA-binding regions (H-T-H motif) span residues 424–447 and 476–499; these read WFKI…IRRL and WARI…KILA. Residues 503–515 are compositionally biased toward basic residues; the sequence is QHLQRKRGQRPRH. Disordered stretches follow at residues 503–558, 662–702, 811–842, and 1079–1117; these read QHLQ…LEKS, LMKE…QNKQ, NAKN…LGSC, and LPSP…PEKA. The span at 516 to 546 shows a compositional bias: low complexity; the sequence is SSQWSSSGSSSSSSEDYGSSSGSDGSSGSEN. 2 stretches are compositionally biased toward polar residues: residues 672–686 and 811–826; these read LPSS…NNTA and NAKN…TGEQ. Residues 1131–1247 form an SNAPC2-binding region; sequence AIVTWLKGCQ…NSIPTTLSPD (117 aa). Ser-1252, Ser-1254, Ser-1301, and Ser-1309 each carry phosphoserine. The segment at 1282-1333 is disordered; sequence PAAPDPVQSHLVSPGQRAPSPGEVSAPSPLDASDGLDDLNVLRTRRARHSRR. The segment covering 1324 to 1333 has biased composition (basic residues); it reads RTRRARHSRR.

As to quaternary structure, part of the SNAPc composed of 5 subunits: SNAPC1, SNAPC2, SNAPC3, SNAPC4 and SNAPC5. SNAPC4 interacts with SNAPC1, SNAPC2, SNAPC5, BRF2 and TBP.

Its subcellular location is the nucleus. Part of the SNAPc complex required for the transcription of both RNA polymerase II and III small-nuclear RNA genes. Binds to the proximal sequence element (PSE), a non-TATA-box basal promoter element common to these 2 types of genes. Recruits TBP and BRF2 to the U6 snRNA TATA box. The chain is snRNA-activating protein complex subunit 4 from Mus musculus (Mouse).